Consider the following 428-residue polypeptide: Beta-1,3-galactosyl-O-glycosyl-glycoprotein beta-1,6-N-acetylglucosaminyltransferase (428 aa).

Over 1–9 (MLRTLLRRR) the chain is Cytoplasmic. The mediates interaction with GOLPH3 and is necessary and sufficient for localization to the Golgi stretch occupies residues 5 to 9 (LLRRR). Residues 10–32 (LFSYPTKYYFMVLVLSLITFSVL) form a helical; Signal-anchor for type II membrane protein membrane-spanning segment. Positions 33–121 (RIHQKPEFVS…EPLSKEEAEF (89 aa)) are stem region. At 33 to 428 (RIHQKPEFVS…RHKALETLKH (396 aa)) the chain is on the lumenal side. N-linked (GlcNAc...) asparagine glycosylation is found at asparagine 58 and asparagine 95. 4 disulfide bridges follow: cysteine 59/cysteine 413, cysteine 100/cysteine 172, cysteine 151/cysteine 199, and cysteine 372/cysteine 381. The tract at residues 122 to 428 (PIAYSIVVHH…RHKALETLKH (307 aa)) is catalytic. UDP-N-acetyl-alpha-D-glucosamine-binding positions include 128-130 (VVH), 155-157 (DTK), and tyrosine 187. The a glycoprotein site is built by glutamate 243, lysine 251, arginine 254, glutamate 320, lysine 341, and tyrosine 358. Catalysis depends on glutamate 320, which acts as the Nucleophile. Residues arginine 378 and lysine 401 each contribute to the UDP-N-acetyl-alpha-D-glucosamine site.

This sequence belongs to the glycosyltransferase 14 family. As to quaternary structure, interacts with GOLPH3; may control GCNT1 retention in the Golgi. As to expression, highly expressed in activated T-lymphocytes and myeloid cells.

Its subcellular location is the golgi apparatus membrane. The catalysed reaction is a 3-O-[beta-D-galactosyl-(1-&gt;3)-N-acetyl-alpha-D-galactosaminyl]-L-seryl-[protein] + UDP-N-acetyl-alpha-D-glucosamine = 3-O-{beta-D-galactosyl-(1-&gt;3)-[N-acetyl-beta-D-glucosaminyl-(1-&gt;6)]-N-acetyl-alpha-D-galactosaminyl}-L-seryl-[protein] + UDP + H(+). It catalyses the reaction a 3-O-[beta-D-galactosyl-(1-&gt;3)-N-acetyl-alpha-D-galactosaminyl]-L-threonyl-[protein] + UDP-N-acetyl-alpha-D-glucosamine = a 3-O-{beta-D-galactosyl-(1-&gt;3)-[N-acetyl-beta-D-glucosaminyl-(1-&gt;6)]-N-acetyl-alpha-D-galactosaminyl}-L-threonyl-[protein] + UDP + H(+). The enzyme catalyses a globoside GalGb4Cer + UDP-N-acetyl-alpha-D-glucosamine = a globoside GlcNAc-(beta1-&gt;6)-GalGb4Cer + UDP + H(+). It carries out the reaction a ganglioside GA1 + UDP-N-acetyl-alpha-D-glucosamine = a ganglioside beta-D-GlcNAc-(1-&gt;6)-GA1 + UDP + H(+). It participates in protein modification; protein glycosylation. The protein operates within glycolipid biosynthesis. Glycosyltransferase that catalyzes the transfer of an N-acetylglucosamine (GlcNAc) moiety in beta1-6 linkage from UDP-GlcNAc onto mucin-type core 1 O-glycan to form the branched mucin-type core 2 O-glycan. The catalysis is metal ion-independent and occurs with inversion of the anomeric configuration of sugar donor. Selectively involved in synthesis of mucin-type core 2 O-glycans that serve as scaffolds for the display of selectin ligand sialyl Lewis X epitope by myeloid cells, with an impact on homeostasis and recruitment to inflammatory sites. Can also act on glycolipid substrates. Transfers GlcNAc moiety to GalGb4Cer globosides in a reaction step to the synthesis of stage-specific embryonic antigen 1 (SSEA-1) determinant. Can use Galbeta1-3GalNAcalpha1- and Galbeta1-3GalNAcbeta1- oligosaccharide derivatives as acceptor substrates. In Homo sapiens (Human), this protein is Beta-1,3-galactosyl-O-glycosyl-glycoprotein beta-1,6-N-acetylglucosaminyltransferase (GCNT1).